A 136-amino-acid chain; its full sequence is UPF0216 protein PH0358 (136 aa).

This sequence belongs to the UPF0216 family.

This chain is UPF0216 protein PH0358, found in Pyrococcus horikoshii (strain ATCC 700860 / DSM 12428 / JCM 9974 / NBRC 100139 / OT-3).